The chain runs to 734 residues: Diacylglycerol kinase alpha (734 aa).

2 EF-hand domains span residues 109–144 and 154–189; these read RPED…MMRM and ELRP…TVPL. Ca(2+)-binding residues include Asp-122, Asp-124, Asn-126, Glu-133, Asp-167, Asp-169, Ser-171, Ser-173, and Glu-178. 2 consecutive Phorbol-ester/DAG-type zinc fingers follow at residues 204 to 252 and 268 to 318; these read QHMW…ALPC and THVW…GHEC. The tract at residues 358 to 505 is necessary and sufficient for the diacylglycerol kinase activity; that stretch reads NLSTSEALRI…MDRWSVEVIP (148 aa). Residues 371–505 form the DAGKc domain; that stretch reads SNTHPLLVFV…MDRWSVEVIP (135 aa). The residue at position 483 (Lys-483) is an N6-acetyllysine.

It belongs to the eukaryotic diacylglycerol kinase family. As to quaternary structure, monomer.

The protein resides in the cytoplasm. It localises to the cytosol. It carries out the reaction a 1,2-diacyl-sn-glycerol + ATP = a 1,2-diacyl-sn-glycero-3-phosphate + ADP + H(+). The enzyme catalyses a 1-O-alkyl-sn-glycerol + ATP = a 1-O-alkyl-sn-glycero-3-phosphate + ADP + H(+). The catalysed reaction is 1-O-alkyl-2-acyl-sn-glycerol + ATP = 1-O-alkyl-2-acyl-sn-glycero-3-phosphate + ADP + H(+). It catalyses the reaction 1,2-dihexadecanoyl-sn-glycerol + ATP = 1,2-dihexadecanoyl-sn-glycero-3-phosphate + ADP + H(+). It carries out the reaction 1-hexadecanoyl-2-(9Z-octadecenoyl)-sn-glycerol + ATP = 1-hexadecanoyl-2-(9Z-octadecenoyl)-sn-glycero-3-phosphate + ADP + H(+). The enzyme catalyses 2-(9Z-octadecenoyl)-glycerol + ATP = 2-(9Z-octadecenoyl)-sn-glycero-3-phosphate + ADP + H(+). The catalysed reaction is 1,2-di-(9Z-octadecenoyl)-sn-glycerol + ATP = 1,2-di-(9Z-octadecenoyl)-sn-glycero-3-phosphate + ADP + H(+). It catalyses the reaction 1-octadecanoyl-2-(5Z,8Z,11Z,14Z-eicosatetraenoyl)-sn-glycerol + ATP = 1-octadecanoyl-2-(5Z,8Z,11Z,14Z-eicosatetraenoyl)-sn-glycero-3-phosphate + ADP + H(+). It carries out the reaction 1,2-didecanoyl-sn-glycerol + ATP = 1,2-didecanoyl-sn-glycero-3-phosphate + ADP + H(+). The enzyme catalyses 1-O-hexadecyl-2-acetyl-sn-glycerol + ATP = 1-O-hexadecyl-2-acetyl-sn-glycero-3-phosphate + ADP + H(+). The catalysed reaction is 1-O-hexadecyl-2-(5Z,8Z,11Z,14Z-eicosatetraenoyl)-sn-glycerol + ATP = 1-O-hexadecyl-2-(5Z,8Z,11Z,14Z-eicosatetraenoyl)-sn-glycero-3-phosphate + ADP + H(+). It catalyses the reaction 1-O-hexadecyl-2-(9Z-octadecenoyl)-sn-glycerol + ATP = 1-O-hexadecyl-2-(9Z-octadecenoyl)-sn-glycero-3-phosphate + ADP + H(+). It carries out the reaction 1-O-hexadecyl-sn-glycerol + ATP = 1-O-hexadecyl-sn-glycero-3-phosphate + ADP + H(+). It participates in lipid metabolism; glycerolipid metabolism. Stimulated by calcium and phosphatidylserine. Functionally, diacylglycerol kinase that converts diacylglycerol/DAG into phosphatidic acid/phosphatidate/PA and regulates the respective levels of these two bioactive lipids. Thereby, acts as a central switch between the signaling pathways activated by these second messengers with different cellular targets and opposite effects in numerous biological processes. Also plays an important role in the biosynthesis of complex lipids. Can also phosphorylate 1-alkyl-2-acylglycerol in vitro as efficiently as diacylglycerol provided it contains an arachidonoyl group. Also involved in the production of alkyl-lysophosphatidic acid, another bioactive lipid, through the phosphorylation of 1-alkyl-2-acetyl glycerol. This is Diacylglycerol kinase alpha (DGKA) from Sus scrofa (Pig).